Consider the following 204-residue polypeptide: Probable chorismate pyruvate-lyase (204 aa).

Residues Arg78, Leu131, and Glu190 each contribute to the substrate site.

This sequence belongs to the UbiC family.

It is found in the cytoplasm. It carries out the reaction chorismate = 4-hydroxybenzoate + pyruvate. It functions in the pathway cofactor biosynthesis; ubiquinone biosynthesis. In terms of biological role, removes the pyruvyl group from chorismate, with concomitant aromatization of the ring, to provide 4-hydroxybenzoate (4HB) for the ubiquinone pathway. The protein is Probable chorismate pyruvate-lyase of Shewanella frigidimarina (strain NCIMB 400).